A 108-amino-acid polypeptide reads, in one-letter code: Urease subunit beta (108 aa).

Belongs to the urease beta subunit family. In terms of assembly, heterotrimer of UreA (gamma), UreB (beta) and UreC (alpha) subunits. Three heterotrimers associate to form the active enzyme.

Its subcellular location is the cytoplasm. It carries out the reaction urea + 2 H2O + H(+) = hydrogencarbonate + 2 NH4(+). The protein operates within nitrogen metabolism; urea degradation; CO(2) and NH(3) from urea (urease route): step 1/1. The protein is Urease subunit beta of Proteus hauseri.